The sequence spans 187 residues: High-affinity copper transporter ctrA2 (187 aa).

2 helical membrane-spanning segments follow: residues 44–64 (YAGT…LVAF) and 137–157 (AAIF…VMTM).

It belongs to the copper transporter (Ctr) (TC 1.A.56) family. SLC31A subfamily.

Its subcellular location is the cell membrane. It carries out the reaction Cu(2+)(in) = Cu(2+)(out). In terms of biological role, high-affinity copper transporter of plasma membrane that mediates copper uptake under low copper conditions. The mechanism driving the transmembrane transport of copper has still to be determined. Acts as a potential virulence factor. The polypeptide is High-affinity copper transporter ctrA2 (Aspergillus fumigatus (strain ATCC MYA-4609 / CBS 101355 / FGSC A1100 / Af293) (Neosartorya fumigata)).